Here is a 335-residue protein sequence, read N- to C-terminus: uncharacterized protein (335 aa).

Solcar repeat units follow at residues 22–129 (VKPI…LLPL), 134–227 (GFPA…IRLF), and 244–327 (KDLY…TKKY). Transmembrane regions (helical) follow at residues 28 to 48 (MLSA…LDVV), 104 to 123 (GLVP…FLGY), 133 to 154 (WGFP…ATIV), 195 to 219 (GILN…FYWW), 246 to 263 (LYIN…ATLL), and 307 to 323 (CVKV…SYHL).

This sequence belongs to the mitochondrial carrier (TC 2.A.29) family.

The protein localises to the mitochondrion inner membrane. This is an uncharacterized protein from Schizosaccharomyces pombe (strain 972 / ATCC 24843) (Fission yeast).